We begin with the raw amino-acid sequence, 947 residues long: Protein NETWORKED 2A (947 aa).

The NAB domain maps to Tyr-10–Leu-90. A disordered region spans residues Val-105–His-131. The span at Leu-109–Asp-118 shows a compositional bias: acidic residues. 2 coiled-coil regions span residues Lys-348–Val-454 and Val-568–Asp-619. Basic and acidic residues-rich tracts occupy residues Leu-618–His-627 and Leu-635–Thr-644. 3 disordered regions span residues Leu-618 to Ser-675, Arg-743 to Ser-763, and Lys-911 to Glu-947. Residues Val-645 to His-660 are compositionally biased toward polar residues. Over residues Gln-662–Ser-675 the composition is skewed to basic and acidic residues. Residues Val-722 to Arg-809 adopt a coiled-coil conformation. Polar residues-rich tracts occupy residues Gln-749–Val-761 and Gln-915–Ser-927.

It belongs to the NET family. Expressed specifically in pollen.

The protein localises to the cell membrane. Its function is as follows. Plant-specific actin binding protein. Associates with F-actin at the plasma membrane in growing pollen tubes. May be part of a membrane-cytoskeletal adapter complex. The sequence is that of Protein NETWORKED 2A from Arabidopsis thaliana (Mouse-ear cress).